Consider the following 171-residue polypeptide: Myosin regulatory light chain 12A (171 aa).

The residue at position 18 (Thr18) is a Phosphothreonine; by MLCK. Ser19 bears the Phosphoserine; by MLCK mark. EF-hand domains follow at residues 28–63 (SQIQ…LGKN), 97–132 (DPED…MGDR), and 133–168 (FTDE…GAKD). 4 residues coordinate Ca(2+): Asp41, Asn43, Asp45, and Asp52.

Myosin is a hexamer of 2 heavy chains and 4 light chains. Phosphorylation increases the actin-activated myosin ATPase activity and thereby regulates the contractile activity. It is required to generate the driving force in the migration of the cells but not necessary for localization of myosin-2 at the leading edge.

In terms of biological role, myosin regulatory subunit that plays an important role in regulation of both smooth muscle and nonmuscle cell contractile activity via its phosphorylation. Implicated in cytokinesis, receptor capping, and cell locomotion. This is Myosin regulatory light chain 12A (MYL12A) from Homo sapiens (Human).